A 195-amino-acid polypeptide reads, in one-letter code: Ferredoxin-2, mitochondrial (195 aa).

The N-terminal 61 residues, Met-1–Cys-61, are a transit peptide targeting the mitochondrion. Residues Asn-81–Thr-182 enclose the 2Fe-2S ferredoxin-type domain. Residues Cys-117, Cys-123, Cys-126, and Cys-163 each contribute to the [2Fe-2S] cluster site.

The protein belongs to the adrenodoxin/putidaredoxin family. As to quaternary structure, component of the mitochondrial core iron-sulfur cluster (ISC) complex composed of NFS1, LYRM4, NDUFAB1, ISCU, FXN, and FDX2; this complex is a heterohexamer containing two copies of each monomer. Form a heterodimer complex with NFS1. Requires [2Fe-2S] cluster as cofactor.

Its subcellular location is the mitochondrion. It localises to the mitochondrion matrix. Functionally, electron donor, of the core iron-sulfur cluster (ISC) assembly complex, that acts to reduce the persulfide into sulfide during [2Fe-2S] clusters assembly on the scaffolding protein ISCU. The core iron-sulfur cluster (ISC) assembly complex is involved in the de novo synthesis of a [2Fe-2S] cluster, the first step of the mitochondrial iron-sulfur protein biogenesis. This process is initiated by the cysteine desulfurase complex (NFS1:LYRM4:NDUFAB1) that produces persulfide which is delivered on the scaffold protein ISCU in a FXN-dependent manner. Then this complex is stabilized by FDX2 which provides reducing equivalents to accomplish the [2Fe-2S] cluster assembly. Finally, the [2Fe-2S] cluster is transferred from ISCU to chaperone proteins, including HSCB, HSPA9 and GLRX5. Essential for coenzyme Q biosynthesis: together with FDXR, transfers the electrons required for the hydroxylation reaction performed by COQ6. In Danio rerio (Zebrafish), this protein is Ferredoxin-2, mitochondrial.